A 378-amino-acid polypeptide reads, in one-letter code: UPF0754 membrane protein Exig_0680 (378 aa).

2 helical membrane passes run 5–25 (VDLV…GAVT) and 357–377 (ITWL…ILLI).

Belongs to the UPF0754 family.

Its subcellular location is the cell membrane. The chain is UPF0754 membrane protein Exig_0680 from Exiguobacterium sibiricum (strain DSM 17290 / CCUG 55495 / CIP 109462 / JCM 13490 / 255-15).